A 150-amino-acid chain; its full sequence is Endoribonuclease YbeY (150 aa).

Residues H102, H106, and H112 each coordinate Zn(2+).

Belongs to the endoribonuclease YbeY family. It depends on Zn(2+) as a cofactor.

It localises to the cytoplasm. Functionally, single strand-specific metallo-endoribonuclease involved in late-stage 70S ribosome quality control and in maturation of the 3' terminus of the 16S rRNA. The chain is Endoribonuclease YbeY from Thermotoga maritima (strain ATCC 43589 / DSM 3109 / JCM 10099 / NBRC 100826 / MSB8).